We begin with the raw amino-acid sequence, 377 residues long: tRNA-specific 2-thiouridylase MnmA (377 aa).

ATP contacts are provided by residues 18 to 25 and methionine 44; that span reads GMSGGVDS. Residues 104–106 are interaction with target base in tRNA; that stretch reads NPD. Cysteine 109 (nucleophile) is an active-site residue. Cysteine 109 and cysteine 209 are disulfide-bonded. Glycine 134 contributes to the ATP binding site. Positions 159–161 are interaction with tRNA; it reads KDQ. Catalysis depends on cysteine 209, which acts as the Cysteine persulfide intermediate. Residues 324–325 are interaction with tRNA; sequence RY.

It belongs to the MnmA/TRMU family.

The protein localises to the cytoplasm. It catalyses the reaction S-sulfanyl-L-cysteinyl-[protein] + uridine(34) in tRNA + AH2 + ATP = 2-thiouridine(34) in tRNA + L-cysteinyl-[protein] + A + AMP + diphosphate + H(+). Its function is as follows. Catalyzes the 2-thiolation of uridine at the wobble position (U34) of tRNA, leading to the formation of s(2)U34. This Photobacterium profundum (strain SS9) protein is tRNA-specific 2-thiouridylase MnmA.